The sequence spans 178 residues: Large ribosomal subunit protein uL6 (178 aa).

This sequence belongs to the universal ribosomal protein uL6 family. As to quaternary structure, part of the 50S ribosomal subunit.

This protein binds to the 23S rRNA, and is important in its secondary structure. It is located near the subunit interface in the base of the L7/L12 stalk, and near the tRNA binding site of the peptidyltransferase center. The polypeptide is Large ribosomal subunit protein uL6 (Nitratiruptor sp. (strain SB155-2)).